Reading from the N-terminus, the 245-residue chain is MEFWGIEVKSGKPVTVTPEEGILIHVSQASLGECKNKKGEFVPLHVKVGNQNLVLGTLSTENIPQLFCDLVFDKEFELSHTWGKGSVYFVGYKTPNIEPQGYSEEEEEEEEEVPAGNAAKAVAKPKAKPAEVKPAVDDEEDESDSDGMDEDDSDGEDSEEEEPTPKKPASSKKRANETTPKAPVSAKKAKVAVTPQKTDEKKKGGKAANQSPKSASQVSCGSCKKTFNSGNALESHNKAKHAAAK.

The residue at position 1 (M1) is an N-acetylmethionine. 2 required to repress transcription regions span residues 2-5 and 101-162; these read EFWG and GYSE…EEEE. Residues 99-245 are disordered; that stretch reads PQGYSEEEEE…HNKAKHAAAK (147 aa). A compositionally biased stretch (acidic residues) spans 103–113; sequence SEEEEEEEEEV. A compositionally biased stretch (low complexity) spans 114–124; it reads PAGNAAKAVAK. The segment covering 137–162 has biased composition (acidic residues); it reads DDEEDESDSDGMDEDDSDGEDSEEEE. Low complexity predominate over residues 178–195; that stretch reads TTPKAPVSAKKAKVAVTP. Residues 208–234 show a composition bias toward polar residues; sequence ANQSPKSASQVSCGSCKKTFNSGNALE. A Phosphoserine modification is found at S211. The segment at 218–241 adopts a C2H2-type zinc-finger fold; it reads VSCGSCKKTFNSGNALESHNKAKH.

It belongs to the histone deacetylase HD2 family. In terms of assembly, interacts with DNMT2. Interacts with DEK3. As to expression, expressed in leaves, roots, stems, young plantlets, flowers and siliques. Highest levels in ovules, embryos, shoot apical meristems and first leaves. Also expressed in somatic embryos.

The protein localises to the nucleus. Its subcellular location is the nucleolus. In terms of biological role, probably mediates the deacetylation of lysine residues on the N-terminal part of the core histones (H2A, H2B, H3 and H4). Histone deacetylation gives a tag for epigenetic repression and plays an important role in transcriptional regulation, cell cycle progression and developmental events. Required for histone H3 'Lys-9' deacetylation. Involved in rRNA gene silencing in nucleolar dominance. Seems to be implicated in the regulation of genes involved in seeds development. This Arabidopsis thaliana (Mouse-ear cress) protein is Histone deacetylase HDT1.